The following is a 186-amino-acid chain: Peptidyl-tRNA hydrolase (186 aa).

TRNA is bound at residue Tyr16. The active-site Proton acceptor is the His21. 2 residues coordinate tRNA: Tyr60 and Asn62.

Belongs to the PTH family. As to quaternary structure, monomer.

It is found in the cytoplasm. The enzyme catalyses an N-acyl-L-alpha-aminoacyl-tRNA + H2O = an N-acyl-L-amino acid + a tRNA + H(+). Its function is as follows. Hydrolyzes ribosome-free peptidyl-tRNAs (with 1 or more amino acids incorporated), which drop off the ribosome during protein synthesis, or as a result of ribosome stalling. In terms of biological role, catalyzes the release of premature peptidyl moieties from peptidyl-tRNA molecules trapped in stalled 50S ribosomal subunits, and thus maintains levels of free tRNAs and 50S ribosomes. This is Peptidyl-tRNA hydrolase from Tropheryma whipplei (strain TW08/27) (Whipple's bacillus).